The primary structure comprises 353 residues: Farnesyl pyrophosphate synthase (353 aa).

Residues Lys57, Arg60, and Gln96 each coordinate isopentenyl diphosphate. Position 57 is an N6-(2-hydroxyisobutyryl)lysine; alternate (Lys57). At Lys57 the chain carries N6-acetyllysine; alternate. Mg(2+) is bound by residues Asp103 and Asp107. Residue Arg112 coordinates dimethylallyl diphosphate. Arg113 is a binding site for isopentenyl diphosphate. Dimethylallyl diphosphate contacts are provided by Lys200, Thr201, Gln240, Lys257, and Lys266.

The protein belongs to the FPP/GGPP synthase family. Homodimer. Interacts with RSAD2. Mg(2+) serves as cofactor. Testis, liver, kidney, brain and adrenal gland.

It is found in the cytoplasm. It carries out the reaction isopentenyl diphosphate + dimethylallyl diphosphate = (2E)-geranyl diphosphate + diphosphate. The enzyme catalyses isopentenyl diphosphate + (2E)-geranyl diphosphate = (2E,6E)-farnesyl diphosphate + diphosphate. It participates in isoprenoid biosynthesis; farnesyl diphosphate biosynthesis; farnesyl diphosphate from geranyl diphosphate and isopentenyl diphosphate: step 1/1. Its pathway is isoprenoid biosynthesis; geranyl diphosphate biosynthesis; geranyl diphosphate from dimethylallyl diphosphate and isopentenyl diphosphate: step 1/1. With respect to regulation, inactivated by interferon-induced RSAD2. This inactivation may result of disruption of lipid rafts at the plasma membrane, and thus have an antiviral effect since many enveloped viruses need lipid rafts to bud efficiently out of the cell. Key enzyme in isoprenoid biosynthesis which catalyzes the formation of farnesyl diphosphate (FPP), a precursor for several classes of essential metabolites including sterols, dolichols, carotenoids, and ubiquinones. FPP also serves as substrate for protein farnesylation and geranylgeranylation. Catalyzes the sequential condensation of isopentenyl pyrophosphate with the allylic pyrophosphates, dimethylallyl pyrophosphate, and then with the resultant geranylpyrophosphate to the ultimate product farnesyl pyrophosphate. This Rattus norvegicus (Rat) protein is Farnesyl pyrophosphate synthase (Fdps).